Reading from the N-terminus, the 429-residue chain is Glucose-1-phosphate adenylyltransferase (429 aa).

Residues G162, 177–178, and S209 contribute to the alpha-D-glucose 1-phosphate site; that span reads EK.

This sequence belongs to the bacterial/plant glucose-1-phosphate adenylyltransferase family. Homotetramer.

It catalyses the reaction alpha-D-glucose 1-phosphate + ATP + H(+) = ADP-alpha-D-glucose + diphosphate. It participates in glycan biosynthesis; glycogen biosynthesis. Its function is as follows. Involved in the biosynthesis of ADP-glucose, a building block required for the elongation reactions to produce glycogen. Catalyzes the reaction between ATP and alpha-D-glucose 1-phosphate (G1P) to produce pyrophosphate and ADP-Glc. The polypeptide is Glucose-1-phosphate adenylyltransferase (Picosynechococcus sp. (strain ATCC 27264 / PCC 7002 / PR-6) (Agmenellum quadruplicatum)).